The primary structure comprises 539 residues: Glucose-6-phosphate isomerase (539 aa).

Residue E340 is the Proton donor of the active site. Active-site residues include H371 and K500.

Belongs to the GPI family.

The protein resides in the cytoplasm. The catalysed reaction is alpha-D-glucose 6-phosphate = beta-D-fructose 6-phosphate. The protein operates within carbohydrate biosynthesis; gluconeogenesis. Its pathway is carbohydrate degradation; glycolysis; D-glyceraldehyde 3-phosphate and glycerone phosphate from D-glucose: step 2/4. In terms of biological role, catalyzes the reversible isomerization of glucose-6-phosphate to fructose-6-phosphate. This chain is Glucose-6-phosphate isomerase, found in Ruegeria pomeroyi (strain ATCC 700808 / DSM 15171 / DSS-3) (Silicibacter pomeroyi).